The sequence spans 161 residues: Ethylene-responsive transcription factor ERF070 (161 aa).

The tract at residues Met-1–Arg-35 is disordered. A DNA-binding region (AP2/ERF) is located at residues Lys-78–Gly-140.

The protein belongs to the AP2/ERF transcription factor family. ERF subfamily.

The protein resides in the nucleus. Probably acts as a transcriptional activator. Binds to the GCC-box pathogenesis-related promoter element. May be involved in the regulation of gene expression by stress factors and by components of stress signal transduction pathways. The polypeptide is Ethylene-responsive transcription factor ERF070 (ERF070) (Arabidopsis thaliana (Mouse-ear cress)).